Reading from the N-terminus, the 329-residue chain is Mas-related G-protein coupled receptor member X2 (329 aa).

The Extracellular segment spans residues 1–33; sequence MDPTTPAWRTESTTMNGNDQALPLLCGKEILIS. The chain crosses the membrane as a helical span at residues 34–54; the sequence is VFLILFIALVGLVGNGFVLWL. Residues 55-63 lie on the Cytoplasmic side of the membrane; the sequence is LGFRMRRNA. A helical membrane pass occupies residues 64-84; that stretch reads FSVYVLSLAGADFLFLCFQII. The Extracellular segment spans residues 85–96; it reads NCLVYLSNFFCS. A helical membrane pass occupies residues 97-117; it reads SSINFPSFFTTVMTCAYLAGL. The Cytoplasmic segment spans residues 118–144; that stretch reads SMLSTISTERCLSVLWPIWYRCRRPRH. A helical transmembrane segment spans residues 145–165; the sequence is LSAVACVLLWALSLLLSILEG. Over 166–183 the chain is Extracellular; it reads KFCGLFGDGDSGWCQTFD. The chain crosses the membrane as a helical span at residues 184–204; that stretch reads LITAAWLIFLFMVLCGSSLAL. The Cytoplasmic portion of the chain corresponds to 205–227; the sequence is LVRILCGSRGLPLTRLYLTILLT. The helical transmembrane segment at 228 to 248 threads the bilayer; that stretch reads VLVFLLCGLPFGIQWFLILWI. The Extracellular portion of the chain corresponds to 249–263; the sequence is WKNSDVLFCHIHPVS. The chain crosses the membrane as a helical span at residues 264 to 284; it reads VVLSSLNSSANPIIYFFVGSF. The Cytoplasmic portion of the chain corresponds to 285–329; sequence RKQWQLQQPILKLALQRALQDIAEVDHSEGCFRQGTPEMSRSSLV.

The protein belongs to the G-protein coupled receptor 1 family. Mas subfamily.

It is found in the cell membrane. Its function is as follows. Mast cell-specific receptor for basic secretagogues, i.e. cationic amphiphilic drugs, as well as endo- or exogenous peptides, consisting of a basic head group and a hydrophobic core. Recognizes and binds small molecules containing a cyclized tetrahydroisoquinoline (THIQ), such as non-steroidal neuromuscular blocking drugs (NMBDs), including tubocurarine and atracurium. In response to these compounds, mediates pseudo-allergic reactions characterized by histamine release, inflammation and airway contraction. This is Mas-related G-protein coupled receptor member X2 (MRGPRX2) from Gorilla gorilla gorilla (Western lowland gorilla).